Reading from the N-terminus, the 202-residue chain is Imidazoleglycerol-phosphate dehydratase (202 aa).

It belongs to the imidazoleglycerol-phosphate dehydratase family.

The protein resides in the cytoplasm. It carries out the reaction D-erythro-1-(imidazol-4-yl)glycerol 3-phosphate = 3-(imidazol-4-yl)-2-oxopropyl phosphate + H2O. Its pathway is amino-acid biosynthesis; L-histidine biosynthesis; L-histidine from 5-phospho-alpha-D-ribose 1-diphosphate: step 6/9. In Synechococcus sp. (strain WH7803), this protein is Imidazoleglycerol-phosphate dehydratase.